Here is a 470-residue protein sequence, read N- to C-terminus: uncharacterized protein (470 aa).

One can recognise an SPX domain in the interval 1–337 (MKFGHDFKRA…SLTAQPLFFQ (337 aa)). The tract at residues 118–145 (ASNVPSTPSDSTQQPPTNTLPSVSASSQ) is disordered. The segment covering 122–136 (PSTPSDSTQQPPTNT) has biased composition (low complexity). The segment at 374-413 (CAICSNVAYKPVRLGCSHVFCLHCLIILQKQKVDFCPLCR) adopts an RING-type zinc-finger fold.

Its subcellular location is the cytoplasm. This is an uncharacterized protein from Schizosaccharomyces pombe (strain 972 / ATCC 24843) (Fission yeast).